The sequence spans 444 residues: Zeaxanthin 4-ketolase (444 aa).

The segment at 408 to 444 (VAGGSSSGGGGEGGKPGAGEHGLLQRQRQLAPVGVMA) is disordered. Gly residues predominate over residues 412-427 (SSSGGGGEGGKPGAGE).

The catalysed reaction is all-trans-adonixanthin + 2 AH2 + 2 O2 = all-trans-(3S,3'S)-astaxanthin + 2 A + 3 H2O. It carries out the reaction all-trans-zeaxanthin + 2 AH2 + 2 O2 = all-trans-adonixanthin + 2 A + 3 H2O. The enzyme catalyses echinenone + 2 AH2 + 2 O2 = canthaxanthin + 2 A + 3 H2O. It catalyses the reaction all-trans-beta-carotene + 2 AH2 + 2 O2 = echinenone + 2 A + 3 H2O. The protein operates within carotenoid biosynthesis; astaxanthin biosynthesis. Involved in the biosynthesis of ketocarotenoids which are powerful anti-oxidative molecules. Catalyzes the conversion of zeaxanthin to astaxanthin via adonixanthin. Catalyzes the conversion of beta-carotene to canthaxanthin via echinenone. This is Zeaxanthin 4-ketolase from Chlamydomonas reinhardtii (Chlamydomonas smithii).